Here is a 264-residue protein sequence, read N- to C-terminus: Phosphonates import ATP-binding protein PhnC (264 aa).

Residues 3-246 form the ABC transporter domain; sequence IRLQEAGLRH…MLDALYANEQ (244 aa). 35-42 is an ATP binding site; that stretch reads GPSGAGKS.

Belongs to the ABC transporter superfamily. Phosphonates importer (TC 3.A.1.9.1) family. The complex is composed of two ATP-binding proteins (PhnC), two transmembrane proteins (PhnE) and a solute-binding protein (PhnD).

Its subcellular location is the cell inner membrane. The enzyme catalyses phosphonate(out) + ATP + H2O = phosphonate(in) + ADP + phosphate + H(+). Its function is as follows. Part of the ABC transporter complex PhnCDE involved in phosphonates import. Responsible for energy coupling to the transport system. The chain is Phosphonates import ATP-binding protein PhnC from Pseudomonas entomophila (strain L48).